A 272-amino-acid polypeptide reads, in one-letter code: tRNA (guanine-N(7)-)-methyltransferase (272 aa).

The span at 1 to 20 shows a compositional bias: basic and acidic residues; that stretch reads MSTDSESKRRAYREEKEGAR. Residues 1-43 are disordered; it reads MSTDSESKRRAYREEKEGARKKSVKLAPEATPESKPDLPRKRY. S-adenosyl-L-methionine contacts are provided by residues G89, 112 to 113, 148 to 149, and C168; these read EI and NA. D171 is an active-site residue. 246–248 provides a ligand contact to S-adenosyl-L-methionine; that stretch reads TEE.

The protein belongs to the class I-like SAM-binding methyltransferase superfamily. TrmB family. In terms of assembly, forms a complex with TRM82.

The protein localises to the nucleus. The enzyme catalyses guanosine(46) in tRNA + S-adenosyl-L-methionine = N(7)-methylguanosine(46) in tRNA + S-adenosyl-L-homocysteine. Its pathway is tRNA modification; N(7)-methylguanine-tRNA biosynthesis. In terms of biological role, catalyzes the formation of N(7)-methylguanine at position 46 (m7G46) in tRNA. In Meyerozyma guilliermondii (strain ATCC 6260 / CBS 566 / DSM 6381 / JCM 1539 / NBRC 10279 / NRRL Y-324) (Yeast), this protein is tRNA (guanine-N(7)-)-methyltransferase.